Here is a 410-residue protein sequence, read N- to C-terminus: Calsequestrin-2 (410 aa).

An N-terminal signal peptide occupies residues 1 to 19 (MKRTHLFIAGLYLLASCRA). The calcium regulated hydrophobic site stretch occupies residues 221-242 (MDEPIAIPDKPYTEEELVEFVK). The residue at position 282 (Y282) is a Phosphotyrosine. N-linked (GlcNAc...) asparagine glycans are attached at residues N335 and N395. Residues 364-410 (DVLSGKINTEDDDNEEGDDGDDDEDDDDDDGNNSDEESNDDSDDDDE) are disordered. The segment covering 373–410 (EDDDNEEGDDGDDDEDDDDDDGNNSDEESNDDSDDDDE) has biased composition (acidic residues). Phosphoserine; by CK2 occurs at positions 397, 401, and 405.

The protein belongs to the calsequestrin family. Interacts with ASPH. Monomer, homodimer and homooligomer. Mostly monomeric in the absence of calcium. Forms higher oligomers in a calcium-dependent manner. Dimers associate to form tetramers, that then form linear homomer chains. Interacts with TRDN. In terms of processing, phosphorylation in the C-terminus, probably by CK2, moderately increases calcium buffering capacity. Post-translationally, N-glycosylated. In terms of tissue distribution, detected in heart muscle (at protein level).

It is found in the sarcoplasmic reticulum lumen. Its function is as follows. Calsequestrin is a high-capacity, moderate affinity, calcium-binding protein and thus acts as an internal calcium store in muscle. Calcium ions are bound by clusters of acidic residues at the protein surface, especially at the interface between subunits. Can bind around 60 Ca(2+) ions. Regulates the release of lumenal Ca(2+) via the calcium release channel RYR2; this plays an important role in triggering muscle contraction. Plays a role in excitation-contraction coupling in the heart and in regulating the rate of heart beats. This is Calsequestrin-2 (CASQ2) from Canis lupus familiaris (Dog).